We begin with the raw amino-acid sequence, 588 residues long: ATP-dependent lipid A-core flippase (588 aa).

6 consecutive transmembrane segments (helical) span residues 23-43 (FWPV…IDAG), 56-76 (FITI…IGIT), 141-161 (DALT…TVMM), 162-182 (VICW…GIIV), 257-277 (LVIA…STVI), and 278-298 (TISA…IKPM). One can recognise an ABC transmembrane type-1 domain in the interval 28–310 (LLGVLANILY…LTTLNATIQR (283 aa)). Residues 342-576 (IEFKHVYHAY…DGHYAQLYKV (235 aa)) enclose the ABC transporter domain. 375-382 (GHSGSGKT) provides a ligand contact to ATP.

The protein belongs to the ABC transporter superfamily. Lipid exporter (TC 3.A.1.106) family. As to quaternary structure, homodimer.

It localises to the cell inner membrane. The enzyme catalyses ATP + H2O + lipid A-core oligosaccharideSide 1 = ADP + phosphate + lipid A-core oligosaccharideSide 2.. Functionally, involved in lipopolysaccharide (LPS) biosynthesis. Translocates lipid A-core from the inner to the outer leaflet of the inner membrane. Transmembrane domains (TMD) form a pore in the inner membrane and the ATP-binding domain (NBD) is responsible for energy generation. In Legionella pneumophila (strain Lens), this protein is ATP-dependent lipid A-core flippase.